A 274-amino-acid chain; its full sequence is MNPEHSPLGKATVYANQYDASLLFPIPRAGAREQIGIGAPLPFFGTDIWNAYELSWLNARGKPQIAIATFYVPAESPNIVESKSFKLYLGSFAQTAFESADAVRDALKRDVSAACGASVTVRLATPAEFRKLQMDELDGLSLDRLDLDAHVYETDPSFLTASHGEAPVEETLVTDLLKSNCPVTGQPDWGSVQIHYVGAPIDHAGLLRYIISFRNHTGFHEQCVERIFVDILRACQPVKLAVYARYTRRGGLDINPFRTNYNQPMPDNARTARQ.

80-82 (VES) serves as a coordination point for substrate. 82-83 (SK) lines the NADPH pocket. Cys181 (thioimide intermediate) is an active-site residue. The active-site Proton donor is Asp188. 220–221 (HE) lines the substrate pocket. Position 249–250 (249–250 (RG)) interacts with NADPH.

It belongs to the GTP cyclohydrolase I family. QueF type 2 subfamily. In terms of assembly, homodimer.

The protein localises to the cytoplasm. The catalysed reaction is 7-aminomethyl-7-carbaguanine + 2 NADP(+) = 7-cyano-7-deazaguanine + 2 NADPH + 3 H(+). It participates in tRNA modification; tRNA-queuosine biosynthesis. In terms of biological role, catalyzes the NADPH-dependent reduction of 7-cyano-7-deazaguanine (preQ0) to 7-aminomethyl-7-deazaguanine (preQ1). The polypeptide is NADPH-dependent 7-cyano-7-deazaguanine reductase (Burkholderia pseudomallei (strain 1106a)).